A 221-amino-acid chain; its full sequence is Probable septum site-determining protein MinC (221 aa).

Belongs to the MinC family. As to quaternary structure, interacts with MinD and FtsZ.

Cell division inhibitor that blocks the formation of polar Z ring septums. Rapidly oscillates between the poles of the cell to destabilize FtsZ filaments that have formed before they mature into polar Z rings. Prevents FtsZ polymerization. This chain is Probable septum site-determining protein MinC, found in Shewanella woodyi (strain ATCC 51908 / MS32).